The primary structure comprises 1497 residues: Collagen alpha-2(V) chain (1497 aa).

The signal sequence occupies residues 1–26 (MMANWVGARPLLILSVLLGYCVSIKA). Positions 38–96 (IACTQHGQMYLNRDIWKPSPCQICVCDNGAILCDKIECPEVLNCANPITPTGECCPVCP) constitute a VWFC domain. The tract at residues 103 to 1265 (TSFGRGRKGQ…PDDTNKTDPG (1163 aa)) is disordered. The short motif at 141 to 143 (RGD) is the Cell attachment site element. Over residues 155–164 (PQGIDGEPGV) the composition is skewed to low complexity. Residues 168-180 (PGAPGPPGHPSHP) show a composition bias toward pro residues. The segment covering 210–225 (PGSVGPVGPRGPQGLQ) has biased composition (low complexity). The segment covering 234–246 (AGPPGEPGEPGPM) has biased composition (pro residues). 3 positions are modified to 4-hydroxyproline: Pro288, Pro291, and Pro294. Low complexity-rich tracts occupy residues 320–338 (EAGPTGPMGAMGPLGPRGM) and 425–441 (TPGAKGPTGSAGTSGPP). Residues 504–506 (RGD) carry the Cell attachment site motif. The segment covering 550–559 (GPKGGQGDPG) has biased composition (gly residues). Low complexity predominate over residues 602–611 (SIGIRGQPGS). A 4-hydroxyproline mark is found at Pro609 and Pro615. The span at 708-719 (RGERGNPGERGE) shows a compositional bias: basic and acidic residues. A compositionally biased stretch (gly residues) spans 730 to 739 (GMAGGHGPDG). Positions 744–756 (PGPTGTIGDTGPP) are enriched in low complexity. A compositionally biased stretch (basic and acidic residues) spans 774-785 (KGDRGGIGEKGA). Composition is skewed to low complexity over residues 824-839 (PPGSRGNPGSRGENGP) and 878-891 (LAGSPGPHGPHGVP). The span at 892–901 (GLKGGRGTQG) shows a compositional bias: gly residues. Pro residues predominate over residues 917 to 927 (PPGPAGAPGPA). 3 consecutive short sequence motifs (cell attachment site) follow at residues 942 to 944 (RGD), 1065 to 1067 (RGD), and 1068 to 1070 (RGD). Positions 1061–1070 (AVGERGDRGD) are enriched in basic and acidic residues. The segment covering 1091-1112 (APGDAGQRGEPGSRGPVGPPGR) has biased composition (low complexity). 2 short sequence motifs (cell attachment site) span residues 1125-1127 (RGD) and 1134-1136 (RGD). Basic and acidic residues predominate over residues 1125–1139 (RGDKGDNGDRGDRGQ). 2 stretches are compositionally biased toward pro residues: residues 1169–1179 (PFGPRGPPGPV) and 1209–1224 (EGPPGEPGPPGPPGPP). The propeptide at 1228–1497 (TAALGDIMGH…GLDIGPVCFM (270 aa)) is C-terminal propeptide. The N-linked (GlcNAc...) asparagine glycan is linked to Asn1260. In terms of domain architecture, Fibrillar collagen NC1 spans 1264–1497 (PGIHVTLKSL…GLDIGPVCFM (234 aa)). Intrachain disulfides connect Cys1294–Cys1326, Cys1334–Cys1495, and Cys1403–Cys1448. Residues Asp1312, Asn1314, Gln1315, and Asp1320 each contribute to the Ca(2+) site. An N-linked (GlcNAc...) asparagine glycan is attached at Asn1398.

This sequence belongs to the fibrillar collagen family. Trimers of two alpha 1(V) and one alpha 2(V) chains expressed in most tissues and trimers of one alpha 1(V), one alpha 2(V), and one alpha 3(V) chains with a more limited distribution of expression. In terms of processing, prolines at the third position of the tripeptide repeating unit (G-X-P) are hydroxylated in some or all of the chains. Probably 3-hydroxylated on prolines by LEPREL1. Post-translationally, hydroxylation on proline residues within the sequence motif, GXPG, is most likely to be 4-hydroxy as this fits the requirement for 4-hydroxylation in vertebrates.

The protein resides in the secreted. It localises to the extracellular space. The protein localises to the extracellular matrix. Type V collagen is a member of group I collagen (fibrillar forming collagen). It is a minor connective tissue component of nearly ubiquitous distribution. Type V collagen binds to DNA, heparan sulfate, thrombospondin, heparin, and insulin. Type V collagen is a key determinant in the assembly of tissue-specific matrices. This Mus musculus (Mouse) protein is Collagen alpha-2(V) chain.